A 127-amino-acid chain; its full sequence is Probable tautomerase YusQ (127 aa).

Residue proline 2 is the Proton acceptor; via imino nitrogen of the active site.

The protein belongs to the 4-oxalocrotonate tautomerase family.

The sequence is that of Probable tautomerase YusQ (yusQ) from Bacillus subtilis (strain 168).